The following is a 642-amino-acid chain: Chaperone protein DnaK (642 aa).

At Thr-200 the chain carries Phosphothreonine; by autocatalysis. Residues 603 to 623 show a composition bias toward low complexity; that stretch reads AAAAEQGGNADAASGNAQASK. The disordered stretch occupies residues 603 to 627; the sequence is AAAAEQGGNADAASGNAQASKAADD.

It belongs to the heat shock protein 70 family.

Acts as a chaperone. In Xanthomonas campestris pv. campestris (strain B100), this protein is Chaperone protein DnaK.